The primary structure comprises 868 residues: Probable mixed-linked glucan synthase 3 (868 aa).

The tract at residues 36 to 68 (ERKAAGGGGGGAKGKHWAAADKGERRAAKECGG) is disordered. Positions 53–68 (AAADKGERRAAKECGG) are enriched in basic and acidic residues. The next 2 membrane-spanning stretches (helical) occupy residues 86–106 (LLHP…LFFG) and 116–136 (IMWF…SWLL). Residue aspartate 211 is part of the active site. Positions 412 and 414 each coordinate substrate. The active site involves aspartate 573. 6 helical membrane-spanning segments follow: residues 649–669 (IYPV…MWLI), 686–706 (LLMI…WAGI), 717–737 (FFMI…VVNL), 771–791 (MLIP…VAIG), 809–829 (IMGL…ALAI), and 837–857 (PIIL…VYVA).

Belongs to the glycosyltransferase 2 family. Plant cellulose synthase-like F subfamily.

Its subcellular location is the golgi apparatus membrane. Its function is as follows. May catalyze both beta-1,3 and beta-1,4 glycosidic linkage on beta-D-glucan. Essential for (1,3;1,4)-beta-D-glucans synthesis in grasses and cereals (Poaceae). The mixed-linked glucans (which are not present in walls of dicotyledons or most other monocotyledonous plants) are particularly important constituents of the walls of the starchy endosperm and aleurone cells of cereal grains such as oats, wheat, rice and barley. They can account for up to 70% by weight of the wall. This chain is Probable mixed-linked glucan synthase 3 (CSLF3), found in Oryza sativa subsp. indica (Rice).